Consider the following 727-residue polypeptide: Probable glutamate carboxypeptidase ARB_02390 (727 aa).

The signal sequence occupies residues 1–18 (MIVKSLSLLALAAATVEG). Residues asparagine 60 and asparagine 80 are each glycosylated (N-linked (GlcNAc...) asparagine). The region spanning 158–296 (ATAEYVYVGR…ISQLDAQPIL (139 aa)) is the PA domain. Arginine 197 lines the substrate pocket. N-linked (GlcNAc...) asparagine glycosylation occurs at asparagine 223. The interval 255–279 (FPGDPTTPGYPSRPDSPRKDKSPVV) is disordered. The Ca(2+) site is built by threonine 261 and tyrosine 264. Residues 266–565 (SRPDSPRKDK…QFLGLLGYHL (300 aa)) form an NAALADase region. Residues asparagine 310, asparagine 319, and asparagine 353 are each glycosylated (N-linked (GlcNAc...) asparagine). Histidine 366 provides a ligand contact to Zn(2+). Catalysis depends on glutamate 414, which acts as the For NAALADase activity. Glutamate 415 serves as a coordination point for Zn(2+). The Ca(2+) site is built by glutamate 423 and glutamate 426. Aspartate 443 provides a ligand contact to Zn(2+). Substrate-binding positions include 516–518 (TGA) and tyrosine 530. A Zn(2+)-binding site is contributed by histidine 531. Catalysis depends on serine 604, which acts as the Charge relay system. Residue asparagine 614 is glycosylated (N-linked (GlcNAc...) asparagine). Histidine 665 acts as the Charge relay system in catalysis. 675–676 (GY) lines the substrate pocket. Asparagine 692 is a glycosylation site (N-linked (GlcNAc...) asparagine).

The protein belongs to the peptidase M28 family. M28B subfamily. The cofactor is Zn(2+).

The protein resides in the secreted. The enzyme catalyses Release of an unsubstituted, C-terminal glutamyl residue, typically from Ac-Asp-Glu or folylpoly-gamma-glutamates.. In terms of biological role, has both folate hydrolase and N-acetylated-alpha-linked-acidic dipeptidase (NAALADase) activity. Also exhibits a dipeptidyl-peptidase IV type activity. The chain is Probable glutamate carboxypeptidase ARB_02390 from Arthroderma benhamiae (strain ATCC MYA-4681 / CBS 112371) (Trichophyton mentagrophytes).